The primary structure comprises 383 residues: Glutaminyl-peptide cyclotransferase-like protein (383 aa).

Residues 33 to 53 form a helical membrane-spanning segment; the sequence is VQFLPLLLLALAMGLAFYIVW. Cys168 and Cys192 are disulfide-bonded. Asp187 serves as a coordination point for Zn(2+). The active-site Proton acceptor is Glu226. Glu227 provides a ligand contact to Zn(2+). Asp270 functions as the Proton acceptor in the catalytic mechanism. His352 is a Zn(2+) binding site.

Belongs to the glutaminyl-peptide cyclotransferase family. Detected in thalamus, hippocampus, brain cortex, cerebellum, kidney, lung and liver, and at low levels in heart and spleen.

The protein localises to the golgi apparatus membrane. The enzyme catalyses N-terminal L-glutaminyl-[peptide] = N-terminal 5-oxo-L-prolyl-[peptide] + NH4(+). In terms of biological role, responsible for the biosynthesis of pyroglutamyl peptides. The chain is Glutaminyl-peptide cyclotransferase-like protein (Qpctl) from Mus musculus (Mouse).